An 83-amino-acid polypeptide reads, in one-letter code: Small ribosomal subunit protein bS16 (83 aa).

Belongs to the bacterial ribosomal protein bS16 family.

The polypeptide is Small ribosomal subunit protein bS16 (Magnetococcus marinus (strain ATCC BAA-1437 / JCM 17883 / MC-1)).